We begin with the raw amino-acid sequence, 591 residues long: Chaperone protein DnaK (591 aa).

T175 bears the Phosphothreonine; by autocatalysis mark. Positions 568 to 577 (AQAAEFANKQ) are enriched in low complexity. A disordered region spans residues 568-591 (AQAAEFANKQNESDPNNNSSEQNN). The segment covering 580–591 (SDPNNNSSEQNN) has biased composition (polar residues).

It belongs to the heat shock protein 70 family.

Functionally, acts as a chaperone. This Mycoplasma mycoides subsp. mycoides SC (strain CCUG 32753 / NCTC 10114 / PG1) protein is Chaperone protein DnaK.